The chain runs to 432 residues: G-protein coupled receptor 22 (432 aa).

Topologically, residues 1 to 45 are extracellular; the sequence is MCFSPVLEINMQSESNVTVRDDIDDIDTNMYQPLSYPLSFQVSLT. The N-linked (GlcNAc...) asparagine glycan is linked to Asn16. The helical transmembrane segment at 46–66 threads the bilayer; the sequence is GFLMLEIVLGLGSNLTVLVLY. Topologically, residues 67–85 are cytoplasmic; the sequence is CMKSNLINSVSNIITMNLH. The chain crosses the membrane as a helical span at residues 86–106; that stretch reads VLDVIICVGCIPLTIVILLLS. The Extracellular segment spans residues 107 to 115; it reads LESNTALIC. The helical transmembrane segment at 116 to 136 threads the bilayer; sequence CFHEACVSFASVSTAINVFAI. The Cytoplasmic portion of the chain corresponds to 137-156; sequence TLDRYDISVKPANRILTMGR. The helical transmembrane segment at 157–177 threads the bilayer; the sequence is AVMLMTSIWIFSFFSFLIPFI. The Extracellular segment spans residues 178-208; the sequence is EVNFFSLQSGNTWANKTLLCVSTSEYYTELG. Asn192 is a glycosylation site (N-linked (GlcNAc...) asparagine). The chain crosses the membrane as a helical span at residues 209–229; it reads MYYHLLVQIPIFFFTVIVMLI. The Cytoplasmic portion of the chain corresponds to 230-314; that stretch reads TYTKILQALN…ERQKRVFKMS (85 aa). The chain crosses the membrane as a helical span at residues 315–335; that stretch reads LLIISTFLLCWTPISVLNTTI. Residues 336–348 are Extracellular-facing; sequence LCLGPSDLLVKLR. Residues 349–369 form a helical membrane-spanning segment; the sequence is LCFLVMAYGTTIFHPLLYAFT. Over 370–432 the chain is Cytoplasmic; the sequence is RQKFQKVLKS…KCLVPQVVTD (63 aa).

It belongs to the G-protein coupled receptor 1 family. In terms of tissue distribution, abundant levels detected in the brain and heart and no detectable expression in other peripheral tissues.

It is found in the cell membrane. In terms of biological role, orphan G-protein coupled receptor. Seems to act through a G(i)/G(o) mediated pathway. May be involved in ciliogenesis. The protein is G-protein coupled receptor 22 (Gpr22) of Mus musculus (Mouse).